Here is a 614-residue protein sequence, read N- to C-terminus: RNA polymerase sigma factor RpoD (614 aa).

A disordered region spans residues 178-222; that stretch reads THIGSDLSQSERDKDDSKDDSKDDDEDEEEEGPKGPDPEESKERF. Over residues 186 to 198 the composition is skewed to basic and acidic residues; sequence QSERDKDDSKDDS. Acidic residues predominate over residues 199-208; sequence KDDDEDEEEE. Residues 209-222 are compositionally biased toward basic and acidic residues; that stretch reads GPKGPDPEESKERF. The interval 380 to 450 is sigma-70 factor domain-2; sequence MVEANLRLVI…TRSIADQART (71 aa). The short motif at 404–407 is the Interaction with polymerase core subunit RpoC element; sequence DLIQ. A sigma-70 factor domain-3 region spans residues 459–535; sequence ETINKLNRIS…DTTLELPLDS (77 aa). Residues 548–601 are sigma-70 factor domain-4; it reads VLAGLTAREAKVLRMRFGIDMNTDHTLEEVGKQFDVTRERIRQIEAKALRKLRH. Positions 574-593 form a DNA-binding region, H-T-H motif; that stretch reads LEEVGKQFDVTRERIRQIEA.

It belongs to the sigma-70 factor family. RpoD/SigA subfamily. As to quaternary structure, interacts transiently with the RNA polymerase catalytic core.

It is found in the cytoplasm. In terms of biological role, sigma factors are initiation factors that promote the attachment of RNA polymerase to specific initiation sites and are then released. This sigma factor is the primary sigma factor during exponential growth. The sequence is that of RNA polymerase sigma factor RpoD from Shewanella violacea (strain JCM 10179 / CIP 106290 / LMG 19151 / DSS12).